Reading from the N-terminus, the 177-residue chain is Protein VERNALIZATION 3 (177 aa).

This sequence belongs to the phosphatidylethanolamine-binding protein family. As to expression, expressed in leaves but not in shoot apex.

In terms of biological role, involved in the regulation of vernalization and of flowering time; this process in essential for flowering in cv. Bd29-1 but seems do not occur in cv. Bd21. The protein is Protein VERNALIZATION 3 of Brachypodium distachyon (Purple false brome).